A 289-amino-acid chain; its full sequence is 4-diphosphocytidyl-2-C-methyl-D-erythritol kinase (289 aa).

The active site involves K10. 94–104 (PVAAGLAGGSS) contacts ATP. D136 is a catalytic residue.

The protein belongs to the GHMP kinase family. IspE subfamily.

It carries out the reaction 4-CDP-2-C-methyl-D-erythritol + ATP = 4-CDP-2-C-methyl-D-erythritol 2-phosphate + ADP + H(+). It functions in the pathway isoprenoid biosynthesis; isopentenyl diphosphate biosynthesis via DXP pathway; isopentenyl diphosphate from 1-deoxy-D-xylulose 5-phosphate: step 3/6. In terms of biological role, catalyzes the phosphorylation of the position 2 hydroxy group of 4-diphosphocytidyl-2C-methyl-D-erythritol. The polypeptide is 4-diphosphocytidyl-2-C-methyl-D-erythritol kinase (Bacillus mycoides (strain KBAB4) (Bacillus weihenstephanensis)).